A 383-amino-acid chain; its full sequence is Probable L-tyrosine/L-aspartate decarboxylase (383 aa).

N6-(pyridoxal phosphate)lysine is present on Lys227.

This sequence belongs to the group II decarboxylase family. MfnA subfamily. Pyridoxal 5'-phosphate is required as a cofactor.

It carries out the reaction L-tyrosine + H(+) = tyramine + CO2. It catalyses the reaction L-aspartate + H(+) = beta-alanine + CO2. Its pathway is cofactor biosynthesis; methanofuran biosynthesis. It participates in cofactor biosynthesis; coenzyme A biosynthesis. In terms of biological role, catalyzes the decarboxylation of L-tyrosine to produce tyramine for methanofuran biosynthesis. Can also catalyze the decarboxylation of L-aspartate to produce beta-alanine for coenzyme A (CoA) biosynthesis. This chain is Probable L-tyrosine/L-aspartate decarboxylase, found in Methanothrix thermoacetophila (strain DSM 6194 / JCM 14653 / NBRC 101360 / PT) (Methanosaeta thermophila).